We begin with the raw amino-acid sequence, 530 residues long: Probable phosphoacetylglucosamine mutase (530 aa).

Ser-62 acts as the Phosphoserine intermediate in catalysis. Ser-62, Asp-278, Asp-280, and Asp-282 together coordinate Mg(2+). Substrate is bound by residues 369-371 (EPN), 481-485 (RPSGT), and Arg-490.

This sequence belongs to the phosphohexose mutase family. Requires Mg(2+) as cofactor.

The catalysed reaction is N-acetyl-alpha-D-glucosamine 1-phosphate = N-acetyl-D-glucosamine 6-phosphate. The protein operates within nucleotide-sugar biosynthesis; UDP-N-acetyl-alpha-D-glucosamine biosynthesis; N-acetyl-alpha-D-glucosamine 1-phosphate from alpha-D-glucosamine 6-phosphate (route I): step 2/2. Functionally, catalyzes the conversion of GlcNAc-6-P into GlcNAc-1-P during the synthesis of uridine diphosphate/UDP-GlcNAc, which is a biosynthetic precursor of chitin and also supplies the amino sugars for N-linked oligosaccharides of glycoproteins. The protein is Probable phosphoacetylglucosamine mutase of Encephalitozoon cuniculi (strain GB-M1) (Microsporidian parasite).